Here is a 260-residue protein sequence, read N- to C-terminus: Adenosylcobinamide-GDP ribazoletransferase (260 aa).

A run of 8 helical transmembrane segments spans residues 3 to 23 (APLWLRDLAGAWIFYSVLPAW), 36 to 56 (FAPWIGLVLGGLQSFLWLVLI), 60 to 80 (WPTSAVALLVIGLGAWLSGGL), 108 to 128 (VGASGVQALLVVVLLQIAALL), 133 to 153 (LAPLALLIAAFWGRCAPLWAM), 180 to 200 (ALPAFLVLLLALTVVPLLMIV), 206 to 226 (MVLMAGIGVGVLPAFLVPELL), and 239 to 259 (GASVVLVETITLLLLAVLLTA).

The protein belongs to the CobS family. Requires Mg(2+) as cofactor.

The protein resides in the cell inner membrane. It carries out the reaction alpha-ribazole + adenosylcob(III)inamide-GDP = adenosylcob(III)alamin + GMP + H(+). The catalysed reaction is alpha-ribazole 5'-phosphate + adenosylcob(III)inamide-GDP = adenosylcob(III)alamin 5'-phosphate + GMP + H(+). It functions in the pathway cofactor biosynthesis; adenosylcobalamin biosynthesis; adenosylcobalamin from cob(II)yrinate a,c-diamide: step 7/7. Joins adenosylcobinamide-GDP and alpha-ribazole to generate adenosylcobalamin (Ado-cobalamin). Also synthesizes adenosylcobalamin 5'-phosphate from adenosylcobinamide-GDP and alpha-ribazole 5'-phosphate. The protein is Adenosylcobinamide-GDP ribazoletransferase of Prochlorococcus marinus (strain MIT 9303).